The chain runs to 514 residues: Na(+)/H(+) antiporter NhaB (514 aa).

The next 12 helical transmembrane spans lie at 23–43, 63–83, 97–117, 120–140, 144–164, 202–222, 238–258, 303–323, 357–377, 391–411, 447–467, and 475–495; these read LALL…PFIA, PLLP…TSAA, LLLM…LFIF, LLLS…AAAF, FLDA…FYGI, LMMH…VGEP, FFLR…LTCM, AVIG…VGLI, LTVF…APII, LFYL…VGTI, ATPN…APLI, and VWMA…CVEF.

The protein belongs to the NhaB Na(+)/H(+) (TC 2.A.34) antiporter family.

The protein resides in the cell inner membrane. It catalyses the reaction 2 Na(+)(in) + 3 H(+)(out) = 2 Na(+)(out) + 3 H(+)(in). Its function is as follows. Na(+)/H(+) antiporter that extrudes sodium in exchange for external protons. This chain is Na(+)/H(+) antiporter NhaB, found in Salmonella newport (strain SL254).